A 301-amino-acid chain; its full sequence is Ribonuclease HIII (301 aa).

The 214-residue stretch at 88-301 (WSVLGSDEVG…TQKARQLARQ (214 aa)) folds into the RNase H type-2 domain. Positions 94, 95, and 197 each coordinate a divalent metal cation.

The protein belongs to the RNase HII family. RnhC subfamily. Requires Mn(2+) as cofactor. The cofactor is Mg(2+).

The protein localises to the cytoplasm. The enzyme catalyses Endonucleolytic cleavage to 5'-phosphomonoester.. Its function is as follows. Endonuclease that specifically degrades the RNA of RNA-DNA hybrids. This chain is Ribonuclease HIII, found in Limosilactobacillus fermentum (strain NBRC 3956 / LMG 18251) (Lactobacillus fermentum).